Here is a 227-residue protein sequence, read N- to C-terminus: Guanylate kinase (227 aa).

Positions 21-199 (GNLFMVVAPS…ALAELECIVA (179 aa)) constitute a Guanylate kinase-like domain. 28–35 (APSGAGKS) contributes to the ATP binding site.

The protein belongs to the guanylate kinase family.

The protein resides in the cytoplasm. The catalysed reaction is GMP + ATP = GDP + ADP. Essential for recycling GMP and indirectly, cGMP. This chain is Guanylate kinase, found in Burkholderia thailandensis (strain ATCC 700388 / DSM 13276 / CCUG 48851 / CIP 106301 / E264).